The sequence spans 186 residues: Elongation factor P (186 aa).

It belongs to the elongation factor P family.

The protein resides in the cytoplasm. It participates in protein biosynthesis; polypeptide chain elongation. Involved in peptide bond synthesis. Stimulates efficient translation and peptide-bond synthesis on native or reconstituted 70S ribosomes in vitro. Probably functions indirectly by altering the affinity of the ribosome for aminoacyl-tRNA, thus increasing their reactivity as acceptors for peptidyl transferase. The chain is Elongation factor P from Elusimicrobium minutum (strain Pei191).